The chain runs to 367 residues: 3-dehydroquinate synthase (367 aa).

NAD(+) contacts are provided by residues 69–74, 103–107, 127–128, lysine 140, and lysine 149; these read DGEAFK, GVIGD, and TT. Residues glutamate 182, histidine 245, and histidine 262 each coordinate Zn(2+).

The protein belongs to the sugar phosphate cyclases superfamily. Dehydroquinate synthase family. The cofactor is NAD(+). Co(2+) is required as a cofactor. Zn(2+) serves as cofactor.

Its subcellular location is the cytoplasm. It carries out the reaction 7-phospho-2-dehydro-3-deoxy-D-arabino-heptonate = 3-dehydroquinate + phosphate. It functions in the pathway metabolic intermediate biosynthesis; chorismate biosynthesis; chorismate from D-erythrose 4-phosphate and phosphoenolpyruvate: step 2/7. Functionally, catalyzes the conversion of 3-deoxy-D-arabino-heptulosonate 7-phosphate (DAHP) to dehydroquinate (DHQ). This chain is 3-dehydroquinate synthase, found in Pseudomonas syringae pv. tomato (strain ATCC BAA-871 / DC3000).